Reading from the N-terminus, the 328-residue chain is Carbonic anhydrase-related protein 11 (328 aa).

The first 23 residues, 1–23 (MGAAPRLSAPRVLVLWAALGAAA), serve as a signal peptide directing secretion. In terms of domain architecture, Alpha-carbonic anhydrase spans 33 to 303 (DWWSYKDNLQ…LAHRALRGNR (271 aa)). Asn118 carries N-linked (GlcNAc...) asparagine glycosylation. Residues 300-328 (RGNRDPRHPERRCRGPNYRLHVDDVPHGL) are disordered. Positions 319 to 328 (LHVDDVPHGL) are enriched in basic and acidic residues.

This sequence belongs to the alpha-carbonic anhydrase family.

It is found in the secreted. Its function is as follows. Does not have a catalytic activity. This chain is Carbonic anhydrase-related protein 11 (CA11), found in Ovis aries (Sheep).